A 518-amino-acid chain; its full sequence is Glutamate--cysteine ligase (518 aa).

The protein belongs to the glutamate--cysteine ligase type 1 family. Type 1 subfamily.

The catalysed reaction is L-cysteine + L-glutamate + ATP = gamma-L-glutamyl-L-cysteine + ADP + phosphate + H(+). The protein operates within sulfur metabolism; glutathione biosynthesis; glutathione from L-cysteine and L-glutamate: step 1/2. This Escherichia coli O7:K1 (strain IAI39 / ExPEC) protein is Glutamate--cysteine ligase.